Here is a 180-residue protein sequence, read N- to C-terminus: Isopentenyl-diphosphate Delta-isomerase (180 aa).

Mn(2+)-binding residues include H26 and H32. A Nudix hydrolase domain is found at 30–168 (ALHLAFSVLL…PELFTAWFPQ (139 aa)). The active site involves C70. C70 is a Mg(2+) binding site. A Mn(2+)-binding site is contributed by H72. A Mg(2+)-binding site is contributed by E90. The Mn(2+) site is built by E117 and E119. E119 is an active-site residue.

The protein belongs to the IPP isomerase type 1 family. Mg(2+) serves as cofactor. It depends on Mn(2+) as a cofactor.

It localises to the cytoplasm. It catalyses the reaction isopentenyl diphosphate = dimethylallyl diphosphate. Its pathway is isoprenoid biosynthesis; dimethylallyl diphosphate biosynthesis; dimethylallyl diphosphate from isopentenyl diphosphate: step 1/1. Catalyzes the 1,3-allylic rearrangement of the homoallylic substrate isopentenyl (IPP) to its highly electrophilic allylic isomer, dimethylallyl diphosphate (DMAPP). The protein is Isopentenyl-diphosphate Delta-isomerase of Photobacterium profundum (strain SS9).